The sequence spans 398 residues: Autophagy-related protein 39 (398 aa).

The ATG8-binding motif lies at 8–11 (WNLV). Residues 15 to 50 (RLRKGREGEEQSSKSEISLDSLHESSFAGEDDEDFD) form a disordered region. Residues 52–59 (DVLSNTSS) carry the ATG11-binding motif. A helical membrane pass occupies residues 148–164 (VIMLSSLLSMTFSYLAL).

As to quaternary structure, interacts with ATG8 and ATG11.

The protein resides in the endoplasmic reticulum membrane. The protein localises to the preautophagosomal structure membrane. Functionally, acts as a receptor for reticulophagy and nucleophagy. Directs autophagic sequestration of double-membrane vesicles derived from the nuclear envelope and perinuclear endoplasmic reticulum (pnER) into autophagosomes. Is not required for the cytoplasm-to-vacuole targeting pathway, mitophagy, pexophagy, and non-selective autophagy. In Saccharomyces cerevisiae (strain ATCC 204508 / S288c) (Baker's yeast), this protein is Autophagy-related protein 39.